Here is a 121-residue protein sequence, read N- to C-terminus: uncharacterized protein (121 aa).

Positions 12 to 24 (EEGGASAAAPDAS) are enriched in low complexity. 2 disordered regions span residues 12–63 (EEGG…RLEP) and 101–121 (KKLAQQPPRLEGSQKERSPVV). Positions 26–35 (KSKKGARPCF) are enriched in basic residues. Residues 40–49 (QAGSCMTGRQ) are compositionally biased toward polar residues. Residues 112–121 (GSQKERSPVV) are compositionally biased toward basic and acidic residues.

This is an uncharacterized protein from Homo sapiens (Human).